The sequence spans 271 residues: Ribosomal RNA small subunit methyltransferase A (271 aa).

6 residues coordinate S-adenosyl-L-methionine: asparagine 18, leucine 20, glycine 45, glutamate 66, aspartate 91, and asparagine 112.

The protein belongs to the class I-like SAM-binding methyltransferase superfamily. rRNA adenine N(6)-methyltransferase family. RsmA subfamily.

Its subcellular location is the cytoplasm. It catalyses the reaction adenosine(1518)/adenosine(1519) in 16S rRNA + 4 S-adenosyl-L-methionine = N(6)-dimethyladenosine(1518)/N(6)-dimethyladenosine(1519) in 16S rRNA + 4 S-adenosyl-L-homocysteine + 4 H(+). In terms of biological role, specifically dimethylates two adjacent adenosines (A1518 and A1519) in the loop of a conserved hairpin near the 3'-end of 16S rRNA in the 30S particle. May play a critical role in biogenesis of 30S subunits. In Vibrio cholerae serotype O1 (strain ATCC 39315 / El Tor Inaba N16961), this protein is Ribosomal RNA small subunit methyltransferase A.